We begin with the raw amino-acid sequence, 545 residues long: Glucose-6-phosphate isomerase (545 aa).

Glutamate 351 acts as the Proton donor in catalysis. Catalysis depends on residues histidine 382 and lysine 510.

It belongs to the GPI family.

The protein resides in the cytoplasm. It carries out the reaction alpha-D-glucose 6-phosphate = beta-D-fructose 6-phosphate. It participates in carbohydrate biosynthesis; gluconeogenesis. Its pathway is carbohydrate degradation; glycolysis; D-glyceraldehyde 3-phosphate and glycerone phosphate from D-glucose: step 2/4. Functionally, catalyzes the reversible isomerization of glucose-6-phosphate to fructose-6-phosphate. This chain is Glucose-6-phosphate isomerase, found in Helicobacter pylori (strain ATCC 700392 / 26695) (Campylobacter pylori).